We begin with the raw amino-acid sequence, 206 residues long: GTP cyclohydrolase 1 (206 aa).

Residues C95, H98, and C166 each coordinate Zn(2+).

It belongs to the GTP cyclohydrolase I family. In terms of assembly, toroid-shaped homodecamer, composed of two pentamers of five dimers.

It carries out the reaction GTP + H2O = 7,8-dihydroneopterin 3'-triphosphate + formate + H(+). It participates in cofactor biosynthesis; 7,8-dihydroneopterin triphosphate biosynthesis; 7,8-dihydroneopterin triphosphate from GTP: step 1/1. In Bartonella bacilliformis (strain ATCC 35685 / KC583 / Herrer 020/F12,63), this protein is GTP cyclohydrolase 1.